The following is a 152-amino-acid chain: Large ribosomal subunit protein bL17 (152 aa).

The segment at 121–140 (APSASQKTGKQDRAKRVKGS) is disordered.

Belongs to the bacterial ribosomal protein bL17 family. Part of the 50S ribosomal subunit. Contacts protein L32.

The polypeptide is Large ribosomal subunit protein bL17 (Pelodictyon phaeoclathratiforme (strain DSM 5477 / BU-1)).